Consider the following 581-residue polypeptide: Arginine--tRNA ligase (581 aa).

The 'HIGH' region signature appears at 131–141 (ANPTGPMHVGH).

This sequence belongs to the class-I aminoacyl-tRNA synthetase family. Monomer.

The protein resides in the cytoplasm. It carries out the reaction tRNA(Arg) + L-arginine + ATP = L-arginyl-tRNA(Arg) + AMP + diphosphate. The sequence is that of Arginine--tRNA ligase from Paracoccus denitrificans (strain Pd 1222).